A 166-amino-acid polypeptide reads, in one-letter code: Large ribosomal subunit protein bL9 (166 aa).

Belongs to the bacterial ribosomal protein bL9 family.

In terms of biological role, binds to the 23S rRNA. The protein is Large ribosomal subunit protein bL9 of Psychrobacter arcticus (strain DSM 17307 / VKM B-2377 / 273-4).